The sequence spans 151 residues: UPF0208 membrane protein KPN78578_26420 (151 aa).

Transmembrane regions (helical) follow at residues 46-65 (YAIRIMPPIAIFTLCWQIAL) and 69-91 (LGPAVATALFALSLPMQGLWWLG).

The protein belongs to the UPF0208 family.

Its subcellular location is the cell inner membrane. In Klebsiella pneumoniae subsp. pneumoniae (strain ATCC 700721 / MGH 78578), this protein is UPF0208 membrane protein KPN78578_26420.